The following is a 247-amino-acid chain: Elongation factor Ts (247 aa).

An involved in Mg(2+) ion dislocation from EF-Tu region spans residues T82–V85.

The protein belongs to the EF-Ts family.

Its subcellular location is the cytoplasm. Functionally, associates with the EF-Tu.GDP complex and induces the exchange of GDP to GTP. It remains bound to the aminoacyl-tRNA.EF-Tu.GTP complex up to the GTP hydrolysis stage on the ribosome. In Arthrospira platensis (Spirulina platensis), this protein is Elongation factor Ts (tsf).